The primary structure comprises 229 residues: Putative N-acetylmannosamine-6-phosphate 2-epimerase (229 aa).

The protein belongs to the NanE family.

It carries out the reaction an N-acyl-D-glucosamine 6-phosphate = an N-acyl-D-mannosamine 6-phosphate. Its pathway is amino-sugar metabolism; N-acetylneuraminate degradation; D-fructose 6-phosphate from N-acetylneuraminate: step 3/5. In terms of biological role, converts N-acetylmannosamine-6-phosphate (ManNAc-6-P) to N-acetylglucosamine-6-phosphate (GlcNAc-6-P). The chain is Putative N-acetylmannosamine-6-phosphate 2-epimerase from Salmonella arizonae (strain ATCC BAA-731 / CDC346-86 / RSK2980).